The chain runs to 500 residues: Endonuclease domain-containing 1 protein (500 aa).

A signal peptide spans 1-21 (MGTARWLALGSLFALAGLLEG). Residues 293 to 323 (ERMVQSQKSSSPLSSTRSKRSTLLPPEASEG) are disordered. Positions 297 to 317 (QSQKSSSPLSSTRSKRSTLLP) are enriched in low complexity. Residue lysine 407 is modified to N6-acetyllysine.

It belongs to the DNA/RNA non-specific endonuclease family. Interacts with RNF26; this interaction is important to modulate innate immune signaling through the cGAS-STING pathway.

It localises to the secreted. In terms of biological role, may act as a DNase and a RNase. Plays a role in the modulation of innate immune signaling through the cGAS-STING pathway by interacting with RNF26. The polypeptide is Endonuclease domain-containing 1 protein (ENDOD1) (Homo sapiens (Human)).